Consider the following 30-residue polypeptide: Cycloviolacin-H3 (30 aa).

A cross-link (cyclopeptide (Gly-Asn)) is located at residues 1–30 (GLPVCGETCFGGTCNTPGCICDPWPVCTRN). Disulfide bonds link C5–C19, C9–C21, and C14–C27.

Post-translationally, this is a cyclic peptide.

In terms of biological role, probably participates in a plant defense mechanism. This Viola hederacea (Australian violet) protein is Cycloviolacin-H3.